The chain runs to 225 residues: MDFIKGLWRDLRARPVDTLVRWQEQRFLWLLMAIAMGGLIILAHSFFQIYLYMAPCEQCVYIRYAMFVMVIGGVIAAINPKNIVLKLIGCIAAFYGSIMGIKFSIKLNGIHHAVHNADPDSLFGVQGCSTDPTFPFNLPLAEWAPEWFKPTGDCGYDAPIVPDGVTLSSVQQWFVDLYQQSEGWYLLPPWHFMNMAQACMLAFGLCLILLLVMSGAWALKLARGK.

Residues 27 to 47 form a helical membrane-spanning segment; sequence FLWLLMAIAMGGLIILAHSFF. Cysteines 56 and 59 form a disulfide. The next 2 helical transmembrane spans lie at 65–85 and 87–107; these read AMFV…NIVL and LIGC…SIKL. Cysteine 128 and cysteine 154 are oxidised to a cystine. Residues 199 to 219 form a helical membrane-spanning segment; it reads CMLAFGLCLILLLVMSGAWAL.

The protein belongs to the DsbB family. DsbI subfamily. In terms of assembly, interacts with DsbL.

The protein localises to the cell inner membrane. Its function is as follows. Required for disulfide bond formation in some proteins. Part of a redox system composed of DsbI and DsbL that mediates formation of an essential disulfide bond in AssT. The protein is Protein-disulfide oxidoreductase DsbI of Salmonella choleraesuis (strain SC-B67).